A 311-amino-acid polypeptide reads, in one-letter code: tRNA dimethylallyltransferase (311 aa).

ATP is bound at residue 13–20 (GPTASGKT). 15–20 (TASGKT) serves as a coordination point for substrate. Interaction with substrate tRNA stretches follow at residues 38–41 (DSMQ) and 166–170 (QRVLR).

Belongs to the IPP transferase family. As to quaternary structure, monomer. Requires Mg(2+) as cofactor.

It catalyses the reaction adenosine(37) in tRNA + dimethylallyl diphosphate = N(6)-dimethylallyladenosine(37) in tRNA + diphosphate. Its function is as follows. Catalyzes the transfer of a dimethylallyl group onto the adenine at position 37 in tRNAs that read codons beginning with uridine, leading to the formation of N6-(dimethylallyl)adenosine (i(6)A). The protein is tRNA dimethylallyltransferase of Staphylococcus aureus (strain bovine RF122 / ET3-1).